The primary structure comprises 479 residues: Flavonol 3-O-glucosyltransferase UGT71C4 (479 aa).

Histidine 17 functions as the Proton acceptor in the catalytic mechanism. Histidine 17 contacts an anthocyanidin. Catalysis depends on aspartate 127, which acts as the Charge relay. UDP-alpha-D-glucose contacts are provided by threonine 150, alanine 350, glutamine 352, histidine 367, tryptophan 370, asparagine 371, serine 372, and glutamate 375. Residue alanine 390 coordinates an anthocyanidin. Glutamate 391 and glutamine 392 together coordinate UDP-alpha-D-glucose.

The protein belongs to the UDP-glycosyltransferase family.

The catalysed reaction is a flavonol + UDP-alpha-D-glucose = a flavonol 3-O-beta-D-glucoside + UDP + H(+). It carries out the reaction a 7-O-hydroxy-flavonol + UDP-alpha-D-glucose = a flavonol 7-O-beta-D-glucoside + UDP + H(+). Its function is as follows. Possesses quercetin 3-O-glucosyltransferase and 7-O-glucosyltransferase activities in vitro. Also active in vitro on benzoates and benzoate derivatives. The polypeptide is Flavonol 3-O-glucosyltransferase UGT71C4 (Arabidopsis thaliana (Mouse-ear cress)).